We begin with the raw amino-acid sequence, 390 residues long: GTPase Obg (390 aa).

The Obg domain maps to Met-1–Leu-159. Residues Asn-127–Gly-147 form a disordered region. A compositionally biased stretch (polar residues) spans Arg-129 to Thr-145. The 174-residue stretch at Ala-160–Ile-333 folds into the OBG-type G domain. GTP contacts are provided by residues Gly-166–Ser-173, Phe-191–Val-195, Asp-213–Gly-216, Asn-283–Asp-286, and Ser-314–Ala-316. Residues Ser-173 and Thr-193 each coordinate Mg(2+).

This sequence belongs to the TRAFAC class OBG-HflX-like GTPase superfamily. OBG GTPase family. As to quaternary structure, monomer. Mg(2+) serves as cofactor.

It is found in the cytoplasm. In terms of biological role, an essential GTPase which binds GTP, GDP and possibly (p)ppGpp with moderate affinity, with high nucleotide exchange rates and a fairly low GTP hydrolysis rate. Plays a role in control of the cell cycle, stress response, ribosome biogenesis and in those bacteria that undergo differentiation, in morphogenesis control. In Salmonella paratyphi A (strain ATCC 9150 / SARB42), this protein is GTPase Obg.